The primary structure comprises 229 residues: Peptidase E (229 aa).

Active-site charge relay system residues include serine 120, aspartate 135, and histidine 157.

Belongs to the peptidase S51 family.

It is found in the cytoplasm. It carries out the reaction Dipeptidase E catalyzes the hydrolysis of dipeptides Asp-|-Xaa. It does not act on peptides with N-terminal Glu, Asn or Gln, nor does it cleave isoaspartyl peptides.. Its function is as follows. Hydrolyzes dipeptides containing N-terminal aspartate residues. May play a role in allowing the cell to use peptide aspartate to spare carbon otherwise required for the synthesis of the aspartate family of amino acids. The polypeptide is Peptidase E (Shigella boydii serotype 18 (strain CDC 3083-94 / BS512)).